Consider the following 102-residue polypeptide: uncharacterized protein (102 aa).

Residues 1-21 (MAESVNENNNNAGDSNGSGRT) form a disordered region. Residue Asn16 is glycosylated (N-linked (GlcNAc...) asparagine). The chain crosses the membrane as a helical span at residues 24–44 (NTIVTIVVVVIVVTLIIILAT). The interval 49 to 102 (IGGSGKKVGAEEPATKLSSKSDDRNGGPNKKSPAKGSSKDDNNTEESVQSNLYG) is disordered. Residues 56 to 73 (VGAEEPATKLSSKSDDRN) show a composition bias toward basic and acidic residues. N-linked (GlcNAc...) asparagine glycosylation occurs at Asn90. Over residues 93-102 (EESVQSNLYG) the composition is skewed to polar residues.

Its subcellular location is the membrane. This is an uncharacterized protein from Encephalitozoon cuniculi (strain GB-M1) (Microsporidian parasite).